Here is a 168-residue protein sequence, read N- to C-terminus: MENLVGLLRIHVKRGVNLAIRDISSSDPYIVVHCGKQKLKTRVVKHSVNPEWNDDLTLSVTDPNLPIKLTVYDYDLLSADDKMGEAEFHIGPFIEAIKFAHQLGPGLPNGTIIKKIEPSRKNCLSESSHIVLNQGKIVQNMFLRLQHVECGEVELQLEWIDVPGSRGI.

Position 1 is an N-acetylmethionine (M1). The C2 domain occupies 1-104 (MENLVGLLRI…EAIKFAHQLG (104 aa)). Ca(2+) is bound by residues R21, D22, D27, D73, Y74, D75, and D81.

This sequence belongs to the plant CAR protein family. Dimers and oligomers. Binds to PYR/PYL/RCAR abscisic acid intracellular receptors in an ABA-independent manner, both at the plasma membrane and in the nucleus. Interacts directly with PYR1, PYL1, PYL4, PYL6 and PYL8. Binds phospholipids in a Ca(2+)-dependent manner. Ca(2+) serves as cofactor. In terms of tissue distribution, expressed in roots.

The protein resides in the cell membrane. Its subcellular location is the nucleus. Stimulates the GTPase/ATPase activities of Obg-like ATPases. Mediates the transient calcium-dependent interaction of PYR/PYL/RCAR abscisic acid (ABA) receptors with the plasma membrane and thus regulates ABA sensitivity. Binds liposomes in the absence of exogenous Ca(2+), but this activity is enhanced in the presence of Ca(2+) and generates membrane curvature. This Arabidopsis thaliana (Mouse-ear cress) protein is Protein C2-DOMAIN ABA-RELATED 1.